Here is a 402-residue protein sequence, read N- to C-terminus: UPF0261 protein mll9388 (402 aa).

Belongs to the UPF0261 family.

This Mesorhizobium japonicum (strain LMG 29417 / CECT 9101 / MAFF 303099) (Mesorhizobium loti (strain MAFF 303099)) protein is UPF0261 protein mll9388.